The sequence spans 609 residues: Hemagglutinin glycoprotein (609 aa).

Residues 1 to 34 (MSPPRDRVDAYYKDNFQFKNTRVVLNKEQLLIER) are Intravirion-facing. Residues 35–58 (PCMLLTVLFVMFLSLVGLLAIAGI) traverse the membrane as a helical; Signal-anchor for type II membrane protein segment. The Virion surface segment spans residues 59–609 (RLHRAAVNTA…VGIKITCNGK (551 aa)). N-linked (GlcNAc...) asparagine; by host glycans are attached at residues Asn168, Asn187, Asn200, Asn215, and Asn395.

It belongs to the paramyxoviruses hemagglutinin-neuraminidase family. Non-sialidase subfamily.

Its subcellular location is the virion membrane. It is found in the host membrane. In terms of biological role, attaches the virus to cell receptors and thereby initiating infection. Binding of H protein to the receptor induces a conformational change that allows the F protein to trigger virion/cell membranes fusion. Down-regulates human MCP/CD46 cell surface expression. In Rinderpest virus (strain Kabete O) (RDV), this protein is Hemagglutinin glycoprotein (H).